We begin with the raw amino-acid sequence, 378 residues long: Deoxyguanosinetriphosphate triphosphohydrolase-like protein (378 aa).

The 137-residue stretch at 62–198 folds into the HD domain; that stretch reads RLTHTIEVAQ…AAVADDVAYN (137 aa).

This sequence belongs to the dGTPase family. Type 2 subfamily.

The polypeptide is Deoxyguanosinetriphosphate triphosphohydrolase-like protein (Paracoccus denitrificans (strain Pd 1222)).